The sequence spans 160 residues: Cyclic pyranopterin monophosphate synthase (160 aa).

Residues 74–76 and 112–113 each bind substrate; these read LSH and ME. Aspartate 127 is an active-site residue.

It belongs to the MoaC family. As to quaternary structure, homohexamer; trimer of dimers.

It catalyses the reaction (8S)-3',8-cyclo-7,8-dihydroguanosine 5'-triphosphate = cyclic pyranopterin phosphate + diphosphate. It functions in the pathway cofactor biosynthesis; molybdopterin biosynthesis. Catalyzes the conversion of (8S)-3',8-cyclo-7,8-dihydroguanosine 5'-triphosphate to cyclic pyranopterin monophosphate (cPMP). This chain is Cyclic pyranopterin monophosphate synthase, found in Trichlorobacter lovleyi (strain ATCC BAA-1151 / DSM 17278 / SZ) (Geobacter lovleyi).